The chain runs to 87 residues: MEEQKSGRKTRVGRVLSNKMDKTVVVVVERLIHHPQYHKFIRRQNKFKAHDAQNACRVGDRVIIEESRPISKDKRWVVVQVLDKAVI.

This sequence belongs to the universal ribosomal protein uS17 family. Part of the 30S ribosomal subunit.

Functionally, one of the primary rRNA binding proteins, it binds specifically to the 5'-end of 16S ribosomal RNA. This chain is Small ribosomal subunit protein uS17, found in Syntrophobacter fumaroxidans (strain DSM 10017 / MPOB).